We begin with the raw amino-acid sequence, 209 residues long: Protein-L-isoaspartate O-methyltransferase (209 aa).

The active site involves Ser-59.

This sequence belongs to the methyltransferase superfamily. L-isoaspartyl/D-aspartyl protein methyltransferase family.

The protein resides in the cytoplasm. It catalyses the reaction [protein]-L-isoaspartate + S-adenosyl-L-methionine = [protein]-L-isoaspartate alpha-methyl ester + S-adenosyl-L-homocysteine. Catalyzes the methyl esterification of L-isoaspartyl residues in peptides and proteins that result from spontaneous decomposition of normal L-aspartyl and L-asparaginyl residues. It plays a role in the repair and/or degradation of damaged proteins. The sequence is that of Protein-L-isoaspartate O-methyltransferase from Helicobacter pylori (strain P12).